Consider the following 366-residue polypeptide: Actin-like protein 8 (366 aa).

This sequence belongs to the actin family. In terms of tissue distribution, strongly expressed in testis and pancreas. Weak expression in placenta.

It is found in the cytoplasm. The protein localises to the cytoskeleton. This chain is Actin-like protein 8 (ACTL8), found in Homo sapiens (Human).